A 424-amino-acid polypeptide reads, in one-letter code: Inhibin beta A chain (424 aa).

Positions 1 to 20 (MPLLWLRGFLLASCWIIVRS) are cleaved as a signal peptide. Positions 21 to 308 (SPTPGSEGPG…EDHPHRRRRR (288 aa)) are excised as a propeptide. N165 is a glycosylation site (N-linked (GlcNAc...) asparagine). The interval 257 to 288 (KKKKKEEEGEGKKKDGGDGGAGADEDKEQSHR) is disordered. Over residues 261-273 (KEEEGEGKKKDGG) the composition is skewed to basic and acidic residues. 4 disulfides stabilise this stretch: C312-C320, C319-C389, C348-C421, and C352-C423.

This sequence belongs to the TGF-beta family. Dimeric, linked by one or more disulfide bonds. Inhibin A is a dimer of alpha/INHA and beta-A/INHBA. Activin A is a homodimer of beta-A/INHBA. Activin AB is a dimer of beta-A/INHBA and beta-B/INHBB. Interacts with FST and FSTL3; these interactions prevent activin A interaction to its type II receptor. Activin A interacts with ACVR2A. Activin A interacts with BMPR2. Inhibin A interacts with ACVR1; this interaction creates a non-signaling complex (NSC) that inhibits ACVR1-mediated BMP signaling. Inhibin A interacts with ACVR2A.

The protein resides in the secreted. Its function is as follows. Inhibins/activins are involved in regulating a number of diverse functions such as hypothalamic and pituitary hormone secretion, gonadal hormone secretion, germ cell development and maturation, erythroid differentiation, insulin secretion, nerve cell survival, embryonic axial development or bone growth, depending on their subunit composition. Functionally, activin A is a homodimer of INHBA that plays a role in several essential biological processes including embryonic development, stem cell maintenance and differentiation, haematopoiesis, cell proliferation and tissue fibrosis. Signals through type I (such as ACVR1B or ACVR1C) and type II receptors (such as ACVR2A, ACVR2B or BMPR2) which, upon ligand binding, phosphorylate SMAD2 and SMAD3 intracellular signaling mediators that form a complex with SMAD4, translocate to the nucleus and modulate gene expression. Can also activate alternative non-canonical intracellular signaling pathways including the p38 MAPK, extracellular signal-regulated kinases 1/2 (ERK1/2) and c-Jun N-terminal kinases (JNKs) to modulate cell migration and differentiation. Alternatively, promotes osteoblastic differentiation via ACVRL1-SMAD1/5/9 pathway. In addition, can engage the type I receptor ACVR1 to form an ACVR1-activin A-type II receptor non-signaling complex (NSC) that renders receptors unavailable for engagement with BMPs, hence resulting in an apparent inhibition of ACVR1-mediated BMP signaling. In terms of biological role, inhibin A is a dimer of alpha/INHA and beta-A/INHBA that functions as a feedback regulator in the hypothalamic-pituitary-gonadal (HPG) axis. Inhibits the secretion of FSH from the anterior pituitary gland by acting on pituitary gonadotrope cells. Antagonizes activin A by binding to the proteoglycan, betaglycan, and forming a stable complex with and, thereby, sequestering type II activin receptors while excluding type I receptor. This is Inhibin beta A chain (INHBA) from Felis catus (Cat).